A 305-amino-acid polypeptide reads, in one-letter code: Dioxygenase hkm4 (305 aa).

The Fe cation site is built by His-140, Asp-142, and His-216.

It belongs to the PhyH family. Fe cation serves as cofactor.

It participates in secondary metabolite biosynthesis. Its function is as follows. Dioxygenase; part of the gene cluster that mediates the biosynthesis of hancockiamides, an unusual new family of N-cinnamoylated piperazines. The NRPS hkm10 and the NmrA-like reductase hkm9 are proposed to convert two molecules of L-Phe to the intermediary piperazine called xenocockiamide A. Xenocockiamide A is then converted to hancockiamide D via a series of hydroxylations and O-methylations. The tyrosinase hkm6 may catalyze an aromatic hydroxylation, then the 2-oxoglutarate-dependent Fe(II) dioxygenase hkm4 and the FAD-dependent phenol hydroxylase hkm7 may catalyze consecutive hydroxylations to install 2 more hydroxy groups, and the methyltransferase hkm8 probably catalyzes two methylations using 2 molecules of S-adenosyl-L-methionine (SAM). The NRPS hkm11 activates and transfers trans-cinnamate supplied by the PAL hkm12 to hancockiamide D and produces hancockiamide A. NRPS Hkm11 has the flexibility to tolerate the bulky hancockiamide G as a substrate and the absence of the acetyl-transferase hkm3 opens up the opportunity for hkm11 to introduce a second N-cinnamoyl moiety. The cytochrome P450 monooxygenase hkm5 catalyzes the methylenedioxy bridge formation, converting hancockiamide A into hancockiamide G. Hkm5 can also convert hancockiamide B into hancockiamide C, and hancockiamide D into hancockiamide H. The N-acetyltransferase hkm3 finally transfers an acetyl group to 1-N of piperazine, converting hancockiamide A into hancockiamide B and hancockiamide G into hancockiamide C. This Aspergillus hancockii protein is Dioxygenase hkm4.